We begin with the raw amino-acid sequence, 290 residues long: uncharacterized protein (290 aa).

The first 25 residues, 1-25 (MNKKSILSKTSLGSLFFLFGTALSA), serve as a signal peptide directing secretion. Residue Cys26 is the site of N-palmitoyl cysteine attachment. Residue Cys26 is the site of S-diacylglycerol cysteine attachment. The tract at residues 183-203 (GTDSKGSGSNNQNGGVTEKDF) is disordered. The span at 186–197 (SKGSGSNNQNGG) shows a compositional bias: low complexity.

This sequence belongs to the MG439/MG440 family.

The protein resides in the cell membrane. This is an uncharacterized protein from Mycoplasma pneumoniae (strain ATCC 29342 / M129 / Subtype 1) (Mycoplasmoides pneumoniae).